The primary structure comprises 256 residues: Thiazole synthase (256 aa).

Residue lysine 95 is the Schiff-base intermediate with DXP of the active site. 1-deoxy-D-xylulose 5-phosphate-binding positions include glycine 156, 182-183 (AG), and 204-205 (NT).

This sequence belongs to the ThiG family. As to quaternary structure, homotetramer. Forms heterodimers with either ThiH or ThiS.

Its subcellular location is the cytoplasm. It carries out the reaction [ThiS sulfur-carrier protein]-C-terminal-Gly-aminoethanethioate + 2-iminoacetate + 1-deoxy-D-xylulose 5-phosphate = [ThiS sulfur-carrier protein]-C-terminal Gly-Gly + 2-[(2R,5Z)-2-carboxy-4-methylthiazol-5(2H)-ylidene]ethyl phosphate + 2 H2O + H(+). It participates in cofactor biosynthesis; thiamine diphosphate biosynthesis. Its function is as follows. Catalyzes the rearrangement of 1-deoxy-D-xylulose 5-phosphate (DXP) to produce the thiazole phosphate moiety of thiamine. Sulfur is provided by the thiocarboxylate moiety of the carrier protein ThiS. In vitro, sulfur can be provided by H(2)S. This Escherichia fergusonii (strain ATCC 35469 / DSM 13698 / CCUG 18766 / IAM 14443 / JCM 21226 / LMG 7866 / NBRC 102419 / NCTC 12128 / CDC 0568-73) protein is Thiazole synthase.